Consider the following 563-residue polypeptide: DNA repair protein rhp7 (563 aa).

Residues 1–101 (MSSGSRVRGP…TDEEAEDNED (101 aa)) are disordered. The segment covering 39–59 (ESAGQSTGTESEVIQTPTSVE) has biased composition (polar residues). Positions 78 to 90 (VKRRNLRNQKKKK) are enriched in basic residues.

This sequence belongs to the RAD7 family.

The protein resides in the nucleus. Functionally, involved in global genome repair (GGR) via nucleotide excision repair (NER), in conjunction with rhp16, after UV irradiation. The chain is DNA repair protein rhp7 (rhp7) from Schizosaccharomyces pombe (strain 972 / ATCC 24843) (Fission yeast).